The chain runs to 183 residues: Capsid protein (183 aa).

The interval 136-183 (NAPILSTLPETTVVRRRGRSPRRRTPSPRRRRSQSPRRRRSQSRESQC) is disordered. A compositionally biased stretch (basic residues) spans 149-176 (VRRRGRSPRRRTPSPRRRRSQSPRRRRS). Serine 155, serine 162, and serine 170 each carry phosphoserine; by host. The 1; half-length repeat unit spans residues 155 to 161 (SPRRRTP). Positions 155-177 (SPRRRTPSPRRRRSQSPRRRRSQ) are 3 X 8 AA repeats of S-P-R-R-R-[PR]-S-Q. The Bipartite nuclear localization signal motif lies at 158 to 175 (RRTPSPRRRRSQSPRRRR). 2 repeat units span residues 162-169 (SPRRRRSQ) and 170-177 (SPRRRRSQ). The segment at 177–183 (QSRESQC) is RNA binding.

The protein belongs to the orthohepadnavirus core antigen family. In terms of assembly, homodimerizes, then multimerizes. Interacts with cytosol exposed regions of viral L glycoprotein present in the reticulum-to-Golgi compartment. Interacts with human FLNB. Phosphorylated form interacts with host importin alpha; this interaction depends on the exposure of the NLS, which itself depends upon genome maturation and/or phosphorylation of the capsid protein. Interacts with host NUP153. Post-translationally, phosphorylated by host SRPK1, SRPK2, and maybe protein kinase C or GAPDH. Phosphorylation is critical for pregenomic RNA packaging. Protein kinase C phosphorylation is stimulated by HBx protein and may play a role in transport of the viral genome to the nucleus at the late step during the viral replication cycle.

It is found in the virion. The protein resides in the host cytoplasm. In terms of biological role, self assembles to form an icosahedral capsid. Most capsids appear to be large particles with an icosahedral symmetry of T=4 and consist of 240 copies of capsid protein, though a fraction forms smaller T=3 particles consisting of 180 capsid proteins. Entering capsids are transported along microtubules to the nucleus. Phosphorylation of the capsid is thought to induce exposure of nuclear localization signal in the C-terminal portion of the capsid protein that allows binding to the nuclear pore complex via the importin (karyopherin-) alpha and beta. Capsids are imported in intact form through the nuclear pore into the nuclear basket, where it probably binds NUP153. Only capsids that contain the mature viral genome can release the viral DNA and capsid protein into the nucleoplasm. Immature capsids get stuck in the basket. Capsids encapsulate the pre-genomic RNA and the P protein. Pre-genomic RNA is reverse-transcribed into DNA while the capsid is still in the cytoplasm. The capsid can then either be directed to the nucleus, providing more genomes for transcription, or bud through the endoplasmic reticulum to provide new virions. The sequence is that of Capsid protein from Hepatitis B virus genotype B2 (isolate Indonesia/pIDW420/1988) (HBV-B).